Reading from the N-terminus, the 2244-residue chain is MADELSISDIIYPECHLDSPIVSGKLISAIEYAQLRHNQPSDDKRLSENIRLNLHGKRKSLYILRQSKQGDYIRNNIKNLKEFMHIAYPECNNILFSITSQGMTSKLDNIMKKSFKAYNIISKKVIGMLQNITRNLITQDRRDEIINIHECRRLGDLGKNMSQSKWYECFLFWFTIKTEMRAVIKNSQKPKFRSDSCIIHMRDKSTEIILNPNLICIFKSDKTGKKCYYLTPEMVLMYCDVLEGRMMMETTVKSDIKYQPLISRSNALWGLIDPLFPVMGNRIYNIVSMIEPLVLALLQLKDEARILRGAFLHHCIKEMHQELSECGFTDQKIRSMFIDDLLSILNIDNIHLLAEFFSFFRTFGHPILEAKVAAEKVREHMLADKVLEYAPIMKAHAIFCGTIINGYRDRHGGAWPPLYLPAHASKHIIRLKNSGESLTIDDCVKNWESFCGIQFDCFMELKLDSDLSMYMKDKALSPIKDEWDSVYPREVLSYTPPKSTEPRRLVDVFVNDENFDPYNMLEYVLSGAYLEDEQFNVSYSLKEKETKQAGRLFAKMTYKMRACQVIAEALIASGVGKYFKENGMVKDEHELLKTLFQLSISSVPRGNSQGNDPQSINNIERDFQYFKGVTTNVKDKKNNSFNKVKSALNNPCQADGVHHNMSPNTRNRYKCSNTSKSFLDYHTEFNPHNHYKSDNTEAAVLSRYEDNTGTKFDTVSAFLTTDLKKFCLNWRYESMAIFAERLDEIYGLPGFFNWMHKRLERSVIYVADPNCPPNIDKHMELEKTPEDDIFIHYPKGGIEGYSQKTWTIATIPFLFLSAYETNTRIAAIVQGDNESIAITQKVHPNLPYKVKKEICAKQAQLYFERLRMNLRALGHNLKATETIISTHLFIYSKKIHYDGAVLSQALKSMSRCCFWSETLVDETRSACSNISTTIAKAIENGLSRNVGYCINILKVIQQLLISTEFSINETLTLDVTSPISNNLDWLITAALIPAPIGGFNYLNLSRIFVRNIGDPVTASLADLKRMIDHSIMTESVLQKVMNQEPGDASFLDWASDPYSGNLPDSQSITKTIKNITARTILRNSPNPMLKGLFHDKSFDEDLELASFLMDRRVILPRAAHEILDNSLTGAREEIAGLLDTTKGLIRSGLRKSGLQPKLVSRLSHHDYNQFLILNKLLSNRRQNDLISSNTCSVDLARALRSHMWRELALGRVIYGLEVPDALEAMVGRYITGSLECQICEQGNTMYGWFFVPRDSQLDQVDREHSSIRVPYVGSSTDERSDIKLGNVKRPTKALRSAIRIATVYTWAYGDNEECWYEAWYLASQRVNIDLDVLKAITPVSTSNNLSHRLRDKSTQFKFAGSVLNRVSRYVNISNDNLDFRIEGEKVDTNLIYQQAMLLGLSVLEGKFRLRLETDDYNGIYHLHVKDNCCVKEVADVGQVDAELPIPEYTEVDNNHLIYDPDPVSEIDCSRLSNQESKSRELDFPLWSTEELHDVLAKTVAQTVLEIITKADKDVLKQHLAIDSDDNINSLITEFLIVDPELFALYLGQSISIKWAFEIHHRRPRGRHTMVDLLSDLVSNTSKHTYKVLSNALSHPRVFKRFVNCGLLLPTQGPYLHQQDFEKLSQNLLVTSYMIYLMNWCDFKKSPFLIAEQDETVISLREDIITSKHLCVIIDLYANHHKPPWIIDLNPQEKICVLRDFISKSRHVDTSSRSWNTSDLDFVIFYASLTYLRRGIIKQLRIRQVTEVIDTTTMLRDNIIVENPPIKTGVLDIRGCIIYNLEEILSMNTKSASKKIFNLNSRPSVENHKYRRIGLNSSSCYKALNLSPLIQRYLPSGAQRLFIGEGSGSMMLLYQSTLGQSISFYNSGIDGDYIPGQRELKLFPSEYSIAEEDPSLTGKLKGLVVPLFNGRPETTWIGNLDSYEYIINRTAGRSIGLVHSDMESGIDKNVEEILVEHSHLISIAINVMMEDGLLVSKIAYTPGFPISRLFNMYRSYFGLVLVCFPVYSNPDSTEVYLLCLQKTVKTIVPPQKVLEHSNLHDEVNDQGITSVIFKIKNSQSKQFHDDLKKYYQIDQPFFVPTKITSDEQVLLQAGLKLNGPEILKSEISYDIGSDINTLRDTIIIMLNEAMNYFDDNRSPSHHLEPYPVLERTRIKTIMNCVTKKVIVYSLIKFKDTKSSELYHIKNNIRRKVLILDFRSKLMTKTLPKGMQERREKNGFKEVWIVDLSNREVKIWWKIIGYISII.

The RdRp catalytic domain occupies 715–899 (VSAFLTTDLK…IYSKKIHYDG (185 aa)). The Mononegavirus-type SAM-dependent 2'-O-MTase domain occupies 1810-2017 (RRIGLNSSSC…NPDSTEVYLL (208 aa)). 1840 to 1849 (LFIGEGSGSM) is an ATP binding site.

It belongs to the paramyxovirus L protein family. In terms of assembly, interacts with the P protein.

The protein resides in the virion. The protein localises to the host cytoplasm. The enzyme catalyses RNA(n) + a ribonucleoside 5'-triphosphate = RNA(n+1) + diphosphate. It carries out the reaction a 5'-end (5'-triphosphoguanosine)-adenylyl-adenylyl-cytidylyl-adenosine in mRNA + 2 S-adenosyl-L-methionine = a 5'-end (N(7)-methyl 5'-triphosphoguanosine)-(2'-O-methyladenylyl)-adenylyl-cytidylyl-adenosine in mRNA + 2 S-adenosyl-L-homocysteine + H(+). The catalysed reaction is a 5'-end (5'-triphosphoguanosine)-adenylyl-adenylyl-cytidylyl-adenosine in mRNA + S-adenosyl-L-methionine = a 5'-end (5'-triphosphoguanosine)-(2'-O-methyladenylyl)-adenylyl-cytidylyl-adenosine in mRNA + S-adenosyl-L-homocysteine + H(+). It catalyses the reaction a 5'-end triphospho-adenylyl-adenylyl-cytidylyl-adenosine in mRNA + GDP + H(+) = a 5'-end (5'-triphosphoguanosine)-adenylyl-adenylyl-cytidylyl-adenosine in mRNA + diphosphate. The enzyme catalyses a 5'-end (5'-triphosphoguanosine)-(2'-O-methyladenylyl)-adenylyl-cytidylyl-adenosine in mRNA + S-adenosyl-L-methionine = a 5'-end (N(7)-methyl 5'-triphosphoguanosine)-(2'-O-methyladenylyl)-adenylyl-cytidylyl-adenosine in mRNA + S-adenosyl-L-homocysteine. It carries out the reaction GTP + H2O = GDP + phosphate + H(+). Its function is as follows. RNA-directed RNA polymerase that catalyzes the transcription of viral mRNAs, their capping and polyadenylation. The template is composed of the viral RNA tightly encapsidated by the nucleoprotein (N). The viral polymerase binds to the genomic RNA at the 3' leader promoter, and transcribes subsequently all viral mRNAs with a decreasing efficiency. The first gene is the most transcribed, and the last the least transcribed. The viral phosphoprotein acts as a processivity factor. Capping is concomitant with initiation of mRNA transcription. Indeed, a GDP polyribonucleotidyl transferase (PRNTase) adds the cap structure when the nascent RNA chain length has reached few nucleotides. Ribose 2'-O methylation of viral mRNA cap precedes and facilitates subsequent guanine-N-7 methylation, both activities being carried by the viral polymerase. Polyadenylation of mRNAs occur by a stuttering mechanism at a slipery stop site present at the end viral genes. After finishing transcription of a mRNA, the polymerase can resume transcription of the downstream gene. RNA-directed RNA polymerase that catalyzes the replication of viral genomic RNA. The template is composed of the viral RNA tightly encapsidated by the nucleoprotein (N). The replicase mode is dependent on intracellular N protein concentration. In this mode, the polymerase replicates the whole viral genome without recognizing transcriptional signals, and the replicated genome is not caped or polyadenylated. The chain is RNA-directed RNA polymerase L (L) from Nipah virus.